The following is a 189-amino-acid chain: Dual-action ribosomal maturation protein DarP (189 aa).

The tract at residues 1–22 (MWKNGAMRGCNKETGEFLGPSR) is disordered.

Belongs to the DarP family.

It localises to the cytoplasm. In terms of biological role, member of a network of 50S ribosomal subunit biogenesis factors which assembles along the 30S-50S interface, preventing incorrect 23S rRNA structures from forming. Promotes peptidyl transferase center (PTC) maturation. The protein is Dual-action ribosomal maturation protein DarP of Xylella fastidiosa (strain Temecula1 / ATCC 700964).